Here is a 598-residue protein sequence, read N- to C-terminus: Serine hydroxymethyltransferase 7 (598 aa).

The segment at 57-85 (QLLEQKAEKTTTVDEPKKDGGGGGDQKED) is disordered. The span at 61–85 (QKAEKTTTVDEPKKDGGGGGDQKED) shows a compositional bias: basic and acidic residues. Position 370 is an N6-(pyridoxal phosphate)lysine (K370).

Belongs to the SHMT family. Homotetramer. Requires pyridoxal 5'-phosphate as cofactor.

The protein resides in the cytoplasm. The catalysed reaction is (6R)-5,10-methylene-5,6,7,8-tetrahydrofolate + glycine + H2O = (6S)-5,6,7,8-tetrahydrofolate + L-serine. Its pathway is one-carbon metabolism; tetrahydrofolate interconversion. Functionally, catalyzes the interconversion of serine and glycine. The sequence is that of Serine hydroxymethyltransferase 7 (SHM7) from Arabidopsis thaliana (Mouse-ear cress).